The following is a 131-amino-acid chain: Small ribosomal subunit protein uS11 (131 aa).

The protein belongs to the universal ribosomal protein uS11 family. Part of the 30S ribosomal subunit. Interacts with proteins S7 and S18. Binds to IF-3.

Located on the platform of the 30S subunit, it bridges several disparate RNA helices of the 16S rRNA. Forms part of the Shine-Dalgarno cleft in the 70S ribosome. The protein is Small ribosomal subunit protein uS11 of Trichormus variabilis (strain ATCC 29413 / PCC 7937) (Anabaena variabilis).